We begin with the raw amino-acid sequence, 88 residues long: Large ribosomal subunit protein bL27 (88 aa).

The disordered stretch occupies residues 1–21; that stretch reads MAHKKGASSSRNGRDSNAKRL.

This sequence belongs to the bacterial ribosomal protein bL27 family.

This is Large ribosomal subunit protein bL27 from Thermobifida fusca (strain YX).